The chain runs to 403 residues: Neuromedin U receptor homolog nmur-2 (403 aa).

At 1-27 the chain is on the extracellular side; sequence MSQCTVEYNVSEITEYVLSTLGERCQS. A helical transmembrane segment spans residues 28–48; that stretch reads AGIVIPTVIIYGTIFLLGLFG. Residues 49-68 are Cytoplasmic-facing; it reads NICTCIVIAANKSMHNPTNY. A helical membrane pass occupies residues 69 to 89; the sequence is YLFSLAVSDIIALILGLPMEF. The Extracellular segment spans residues 90–109; that stretch reads YQSLDYSYPYRFSEGICKAR. A helical membrane pass occupies residues 110–130; it reads AFLIEFTSYASIMIICCFSFE. Residues 131–151 are Cytoplasmic-facing; that stretch reads RWLAICHPLRSKIFSTLWRAN. Residues 152-172 traverse the membrane as a helical segment; that stretch reads VLIILAWTISFVCALPIAFIV. The Extracellular portion of the chain corresponds to 173–216; the sequence is QINKLPLPEDAKYQPWTNKVSTDGIFVLHTEFCAMNQSRPDQQK. Residues 217-237 traverse the membrane as a helical segment; that stretch reads MIIIFAFTVFFVIPAIAIVIM. The Cytoplasmic segment spans residues 238–268; it reads YAHIAVQLESSEIDLKGDKMVKKRRNKSNRT. The chain crosses the membrane as a helical span at residues 269–289; sequence VLKMLLSVVITFFICWLPFHI. The Extracellular portion of the chain corresponds to 290 to 304; that stretch reads QRLLSVYTTWSETTT. The chain crosses the membrane as a helical span at residues 305–325; the sequence is ISPPVQFLSMIVFYISGFCYY. The Cytoplasmic portion of the chain corresponds to 326–403; it reads SNSAANPILY…PHRKLEVHNY (78 aa).

The protein belongs to the G-protein coupled receptor 1 family.

It localises to the membrane. Its function is as follows. Putative G protein-coupled receptor for pyrokinin-like neuropeptide derived from the processing of the neuropeptide precursor capa-1. The polypeptide is Neuromedin U receptor homolog nmur-2 (Caenorhabditis elegans).